The following is a 356-amino-acid chain: Protein pelota homolog (356 aa).

The protein belongs to the eukaryotic release factor 1 family. Pelota subfamily. Monomer. Requires a divalent metal cation as cofactor.

It localises to the cytoplasm. In terms of biological role, may function in recognizing stalled ribosomes, interact with stem-loop structures in stalled mRNA molecules, and effect endonucleolytic cleavage of the mRNA. May play a role in the release non-functional ribosomes and degradation of damaged mRNAs. Has endoribonuclease activity. The protein is Protein pelota homolog of Pyrococcus furiosus (strain ATCC 43587 / DSM 3638 / JCM 8422 / Vc1).